A 70-amino-acid chain; its full sequence is Protein SlyX homolog (70 aa).

The protein belongs to the SlyX family.

This Agrobacterium fabrum (strain C58 / ATCC 33970) (Agrobacterium tumefaciens (strain C58)) protein is Protein SlyX homolog.